The chain runs to 555 residues: MIWVAVVITMLLFILVAKPTGIYLEKAFQGSKKLDKVFGPFEKLIFKITGVKEYNQTWKQYALSLVLLNGFMIVVVYFVFRLQGVLPLNPANIKGMEPTLAFNTAISFMADTNLQHYSGENGLSYLSQLIGITFLMFAAPATTLALVMAFIRGLAGKELGNFFVDFTRALTRVFLPIAFMAALVFVALGVPQTLDGVVTAQTIDGAKQSILRGPVASFVSIKELGNNGGGFFGANSTHPFENPGQMSNILQMMLMMLLPTALPFTYGRMVGNKKQGRILFVSLFMVFLLGFITITTSELNGNPVLNGMGIEHVQGSTEGKEVRFGTVFSSLYATVTTAAETGAVNTMHDTLTPIGGLVPLVNMMLNTVYGGVGAGFVNIIMYAIIAVFISGLMVGRTPEFLGKKIEGKEMKLIAVTILFHPLLILGFSALALSTHLGTEAISNSGFHGLTQVVYEYTSSAANNGSGFEGLADNTPFWNITTGLVMFLGRYFSLITMLAVAASLKEKTVVPETVGTFRTDNSLFGGIFIGTIVIVGALTFFPMLVLGPIAEFLTLK.

10 consecutive transmembrane segments (helical) span residues 2–22, 60–80, 130–150, 173–193, 246–266, 278–298, 374–394, 412–432, 483–503, and 525–545; these read IWVA…PTGI, QYAL…YFVF, IGIT…VMAF, VFLP…VPQT, MSNI…PFTY, ILFV…TTSE, AGFV…GLMV, LIAV…ALAL, LVMF…AASL, and GIFI…MLVL.

It belongs to the KdpA family. As to quaternary structure, the system is composed of three essential subunits: KdpA, KdpB and KdpC.

It is found in the cell membrane. Its function is as follows. Part of the high-affinity ATP-driven potassium transport (or Kdp) system, which catalyzes the hydrolysis of ATP coupled with the electrogenic transport of potassium into the cytoplasm. This subunit binds the extracellular potassium ions and delivers the ions to the membrane domain of KdpB through an intramembrane tunnel. This chain is Potassium-transporting ATPase potassium-binding subunit, found in Bacillus cereus (strain ATCC 10987 / NRS 248).